A 758-amino-acid chain; its full sequence is 5-methyltetrahydropteroyltriglutamate--homocysteine methyltransferase (758 aa).

Residues 16-19 and lysine 112 each bind 5-methyltetrahydropteroyltri-L-glutamate; that span reads RELK. Residues 433–435 and glutamate 486 contribute to the L-homocysteine site; that span reads IGS. Residues 433-435 and glutamate 486 contribute to the L-methionine site; that span reads IGS. 5-methyltetrahydropteroyltri-L-glutamate contacts are provided by residues 517–518 and tryptophan 563; that span reads RC. Aspartate 601 is an L-homocysteine binding site. An L-methionine-binding site is contributed by aspartate 601. Glutamate 607 contributes to the 5-methyltetrahydropteroyltri-L-glutamate binding site. Residues histidine 643, cysteine 645, and glutamate 667 each coordinate Zn(2+). Histidine 696 acts as the Proton donor in catalysis. Cysteine 728 serves as a coordination point for Zn(2+).

This sequence belongs to the vitamin-B12 independent methionine synthase family. It depends on Zn(2+) as a cofactor.

It carries out the reaction 5-methyltetrahydropteroyltri-L-glutamate + L-homocysteine = tetrahydropteroyltri-L-glutamate + L-methionine. It functions in the pathway amino-acid biosynthesis; L-methionine biosynthesis via de novo pathway; L-methionine from L-homocysteine (MetE route): step 1/1. Functionally, catalyzes the transfer of a methyl group from 5-methyltetrahydrofolate to homocysteine resulting in methionine formation. The protein is 5-methyltetrahydropteroyltriglutamate--homocysteine methyltransferase of Neisseria meningitidis serogroup C / serotype 2a (strain ATCC 700532 / DSM 15464 / FAM18).